A 331-amino-acid polypeptide reads, in one-letter code: MAFTDRLLDAWYKGHPALALLRPLEGLYRRVVERKRARFLAGEGDIYRAPVPVIVVGNITVGGTGKTPLILWMIEHCRRRGLRVGVVSRGYGAKPPSLPWRVLPDQSASEAGDEPLLIVQRCGVPLMIDPDRSRAVQALLAAEPLDLILSDDGLQHYRLARDLELVLIDAARGLGNRRCLPAGPLREPVERLSSVDALLYNGAMADRGDGYAFRLKPSALINLRSGERQPVDYFPAGQALHAVAGIGNPRRFFNTLEGLHWRPVPHAFADHAVYSAEALTFTPALPLVMTEKDAVKCRAFAADDWWYLAVDAVPSDAFVGWFDQQLLRLSP.

60–67 (TVGGTGKT) is an ATP binding site.

Belongs to the LpxK family.

The catalysed reaction is a lipid A disaccharide + ATP = a lipid IVA + ADP + H(+). It participates in glycolipid biosynthesis; lipid IV(A) biosynthesis; lipid IV(A) from (3R)-3-hydroxytetradecanoyl-[acyl-carrier-protein] and UDP-N-acetyl-alpha-D-glucosamine: step 6/6. In terms of biological role, transfers the gamma-phosphate of ATP to the 4'-position of a tetraacyldisaccharide 1-phosphate intermediate (termed DS-1-P) to form tetraacyldisaccharide 1,4'-bis-phosphate (lipid IVA). This Pseudomonas syringae pv. syringae (strain B728a) protein is Tetraacyldisaccharide 4'-kinase.